The chain runs to 48 residues: Small, acid-soluble spore protein P (48 aa).

Residues 1 to 12 (MTNKNDGKDMRK) are compositionally biased toward basic and acidic residues. The segment at 1 to 48 (MTNKNDGKDMRKNAPKGAQPGQPEPLSGSKKVKNRNHTRQKHNSSHDM) is disordered. Positions 30 to 48 (KKVKNRNHTRQKHNSSHDM) are enriched in basic residues.

It belongs to the SspP family.

It localises to the spore core. This chain is Small, acid-soluble spore protein P, found in Bacillus licheniformis (strain ATCC 14580 / DSM 13 / JCM 2505 / CCUG 7422 / NBRC 12200 / NCIMB 9375 / NCTC 10341 / NRRL NRS-1264 / Gibson 46).